We begin with the raw amino-acid sequence, 346 residues long: Ribosomal RNA small subunit methyltransferase H (346 aa).

S-adenosyl-L-methionine-binding positions include 46 to 48 (GGY), Asp63, Phe90, Asp113, and Gln120. A disordered region spans residues 270–327 (GGSAGSRHMPETHMRLPSFTPAVKGAVGPTPEEEERNPRARSAKLRAGIRTENSPLED).

The protein belongs to the methyltransferase superfamily. RsmH family.

The protein resides in the cytoplasm. It catalyses the reaction cytidine(1402) in 16S rRNA + S-adenosyl-L-methionine = N(4)-methylcytidine(1402) in 16S rRNA + S-adenosyl-L-homocysteine + H(+). Functionally, specifically methylates the N4 position of cytidine in position 1402 (C1402) of 16S rRNA. The sequence is that of Ribosomal RNA small subunit methyltransferase H from Brucella ovis (strain ATCC 25840 / 63/290 / NCTC 10512).